Consider the following 96-residue polypeptide: C-C motif chemokine 1 (96 aa).

The N-terminal stretch at 1–23 (MQIITTALVCLLLAGMWPEDVDS) is a signal peptide. Intrachain disulfides connect C33–C57, C34–C73, and C49–C91. Residue N52 is glycosylated (N-linked (GlcNAc...) asparagine).

Belongs to the intercrine beta (chemokine CC) family. Monomer.

Its subcellular location is the secreted. Functionally, cytokine that is chemotactic for monocytes but not for neutrophils. Binds to CCR8. In Homo sapiens (Human), this protein is C-C motif chemokine 1 (CCL1).